Reading from the N-terminus, the 445-residue chain is Gamma-glutamyl phosphate reductase (445 aa).

This sequence belongs to the gamma-glutamyl phosphate reductase family.

It is found in the cytoplasm. It carries out the reaction L-glutamate 5-semialdehyde + phosphate + NADP(+) = L-glutamyl 5-phosphate + NADPH + H(+). The protein operates within amino-acid biosynthesis; L-proline biosynthesis; L-glutamate 5-semialdehyde from L-glutamate: step 2/2. In terms of biological role, catalyzes the NADPH-dependent reduction of L-glutamate 5-phosphate into L-glutamate 5-semialdehyde and phosphate. The product spontaneously undergoes cyclization to form 1-pyrroline-5-carboxylate. The protein is Gamma-glutamyl phosphate reductase of Persephonella marina (strain DSM 14350 / EX-H1).